Here is a 61-residue protein sequence, read N- to C-terminus: Metallothionein-1C (61 aa).

The segment at 1–29 is beta; the sequence is MDPNCSCSTGGSCSCAGSCTCKACRCTSC. The a divalent metal cation site is built by Cys-5, Cys-7, Cys-13, Cys-15, Cys-19, Cys-21, Cys-24, Cys-26, Cys-29, Cys-33, Cys-34, Cys-36, Cys-37, Cys-41, Cys-44, Cys-48, Cys-50, Cys-57, Cys-59, and Cys-60. Residues 30–61 form an alpha region; it reads KKSCCSCCPAGCARCAQGCICKGASDKCSCCA.

It belongs to the metallothionein superfamily. Type 1 family. In terms of assembly, monomer.

Functionally, metallothioneins have a high content of cysteine residues that bind various heavy metals; these proteins are transcriptionally regulated by both heavy metals and glucocorticoids. The polypeptide is Metallothionein-1C (MT1C) (Sus scrofa (Pig)).